A 314-amino-acid chain; its full sequence is NAC domain-containing protein 10 (314 aa).

Polar residues predominate over residues 18-39 (VSNTDHPSVQLKDQSQSCVTSR). Disordered stretches follow at residues 18-48 (VSNT…SAET) and 150-182 (YTTG…PVLS). One can recognise an NAC domain in the interval 77–236 (LPAGVKFDPS…EPVLSKVFYQ (160 aa)). Over residues 160–171 (VSTDEEGHETRW) the composition is skewed to basic and acidic residues. A DNA-binding region spans residues 187-242 (TGFKKILVLYTNYGRQKKPEKTNWVMHQYHLGSSEDEKDGEPVLSKVFYQTQPRQC).

As to expression, expressed in protoxylem and elongating interfascicular fiber cells of elongating internodes, developing metaxylem cells and interfascicular fibers of non-elongating internodes and developing secondary xylem of roots.

It is found in the nucleus. In terms of biological role, transcriptional activator that plays a regulatory role in the development of secondary cell wall fibers. Is a direct target of SND1. This is NAC domain-containing protein 10 from Arabidopsis thaliana (Mouse-ear cress).